The primary structure comprises 320 residues: ATP synthase gamma chain (320 aa).

The protein belongs to the ATPase gamma chain family. F-type ATPases have 2 components, CF(1) - the catalytic core - and CF(0) - the membrane proton channel. CF(1) has five subunits: alpha(3), beta(3), gamma(1), delta(1), epsilon(1). CF(0) has three main subunits: a, b and c.

It is found in the cell membrane. Functionally, produces ATP from ADP in the presence of a proton gradient across the membrane. The gamma chain is believed to be important in regulating ATPase activity and the flow of protons through the CF(0) complex. In Lactobacillus delbrueckii subsp. bulgaricus (strain ATCC 11842 / DSM 20081 / BCRC 10696 / JCM 1002 / NBRC 13953 / NCIMB 11778 / NCTC 12712 / WDCM 00102 / Lb 14), this protein is ATP synthase gamma chain.